Consider the following 263-residue polypeptide: 3'-5' ssDNA/RNA exonuclease TatD (263 aa).

A divalent metal cation contacts are provided by E91, H127, and H152.

The protein belongs to the metallo-dependent hydrolases superfamily. TatD-type hydrolase family. TatD subfamily. In terms of assembly, monomer. Mg(2+) is required as a cofactor.

Its subcellular location is the cytoplasm. In terms of biological role, 3'-5' exonuclease that prefers single-stranded DNA and RNA. May play a role in the H(2)O(2)-induced DNA damage repair. The sequence is that of 3'-5' ssDNA/RNA exonuclease TatD from Cronobacter turicensis (strain DSM 18703 / CCUG 55852 / LMG 23827 / z3032).